The following is a 419-amino-acid chain: MAQHNAFYAQSGGVTAVINASACGVIEACRRHDDRIGKVYAGHNGIIGALTEDLIDVSQESDEAIAALRHTPAGAFGSCRYKLKDIETHRTQYERLIEVFRAHDIRYFFYNGGGDSADTCLKVSQLSEKMGYPLTAIHVPKTVDNDLPITDNSPGFGSVAKYIATSTLEASLDIASMCATSTKVFVLEVMGRHAGWIAAAGALAGQGEGDPPHLVIFPEIDFDRAAVMARVEESVKKCGYCVIVVSEGARYEDGTFLADSGNTDAFGHRQLGGVAPTLAGMIKQDLGYKYHWAVADYLQRAARHLASKTDVDQAYAVGEKAVELALDGQNAKMPAIKRISDEPYAWTVEAAPLADVANREKFMPRDFIREDGFGITEQCRRYLAPLIQGEDFPPFENGLPKVAKLAKHRVERKLPEFKL.

A diphosphate-binding site is contributed by G13. Substrate-binding positions include 142–144 (TVD), 190–192 (MGR), E247, and 297–300 (YLQR). The Proton acceptor role is filled by D144.

Belongs to the phosphofructokinase type A (PFKA) family. PPi-dependent PFK group II subfamily. Clade 'B2' sub-subfamily. As to quaternary structure, homodimer. Requires Mg(2+) as cofactor.

It localises to the cytoplasm. The catalysed reaction is beta-D-fructose 6-phosphate + diphosphate = beta-D-fructose 1,6-bisphosphate + phosphate + H(+). It participates in carbohydrate degradation; glycolysis; D-glyceraldehyde 3-phosphate and glycerone phosphate from D-glucose: step 3/4. With respect to regulation, non-allosteric. Functionally, catalyzes the phosphorylation of D-fructose 6-phosphate, the first committing step of glycolysis. Uses inorganic phosphate (PPi) as phosphoryl donor instead of ATP like common ATP-dependent phosphofructokinases (ATP-PFKs), which renders the reaction reversible, and can thus function both in glycolysis and gluconeogenesis. Consistently, PPi-PFK can replace the enzymes of both the forward (ATP-PFK) and reverse (fructose-bisphosphatase (FBPase)) reactions. This chain is Pyrophosphate--fructose 6-phosphate 1-phosphotransferase, found in Halomonas elongata (strain ATCC 33173 / DSM 2581 / NBRC 15536 / NCIMB 2198 / 1H9).